We begin with the raw amino-acid sequence, 60 residues long: Ferredoxin (60 aa).

2 consecutive 4Fe-4S ferredoxin-type domains span residues 2 to 30 (VTIDYDKCKGPECAECVNACPMEVFEIQG) and 31 to 60 (DKVVVAKEDDCTFCMVCVDVCPTDAITVKE). Residues Cys9, Cys14, Cys17, Cys21, Cys41, Cys44, Cys47, and Cys51 each coordinate [4Fe-4S] cluster.

It depends on [4Fe-4S] cluster as a cofactor.

Functionally, ferredoxins are iron-sulfur proteins that transfer electrons probably in the CO-dehydrogenase complex. This is Ferredoxin from Methanothermococcus thermolithotrophicus (Methanococcus thermolithotrophicus).